The sequence spans 431 residues: Histidinol dehydrogenase (431 aa).

NAD(+) is bound by residues tyrosine 127, glutamine 189, and asparagine 212. The substrate site is built by serine 237, glutamine 259, and histidine 262. The Zn(2+) site is built by glutamine 259 and histidine 262. Active-site proton acceptor residues include glutamate 326 and histidine 327. Substrate contacts are provided by histidine 327, aspartate 360, glutamate 414, and histidine 419. Aspartate 360 contacts Zn(2+). Residue histidine 419 participates in Zn(2+) binding.

Belongs to the histidinol dehydrogenase family. It depends on Zn(2+) as a cofactor.

The enzyme catalyses L-histidinol + 2 NAD(+) + H2O = L-histidine + 2 NADH + 3 H(+). Its pathway is amino-acid biosynthesis; L-histidine biosynthesis; L-histidine from 5-phospho-alpha-D-ribose 1-diphosphate: step 9/9. Functionally, catalyzes the sequential NAD-dependent oxidations of L-histidinol to L-histidinaldehyde and then to L-histidine. In Xylella fastidiosa (strain 9a5c), this protein is Histidinol dehydrogenase.